The primary structure comprises 244 residues: tRNA pseudouridine synthase A (244 aa).

Asp-52 (nucleophile) is an active-site residue. Residue Tyr-111 coordinates substrate.

This sequence belongs to the tRNA pseudouridine synthase TruA family. Homodimer.

It carries out the reaction uridine(38/39/40) in tRNA = pseudouridine(38/39/40) in tRNA. Formation of pseudouridine at positions 38, 39 and 40 in the anticodon stem and loop of transfer RNAs. This is tRNA pseudouridine synthase A from Thermosipho melanesiensis (strain DSM 12029 / CIP 104789 / BI429).